The following is an 804-amino-acid chain: Cas scaffolding protein family member 4 (804 aa).

The region spanning Pro-11–Glu-73 is the SH3 domain. A phosphoserine mark is found at Ser-200 and Ser-297. 3 disordered regions span residues Leu-369–Arg-395, Gln-607–Ser-628, and Gln-642–Lys-686. The segment covering Pro-380 to Ser-390 has biased composition (polar residues). A compositionally biased stretch (basic and acidic residues) spans Glu-649–Asp-664.

Belongs to the CAS family. As to quaternary structure, interacts (via SH3 domain) with PTK2/FAK1 (via C-terminus). Phosphorylated on tyrosines by SRC.

Its subcellular location is the cytoplasm. The protein localises to the cytoskeleton. It is found in the cell junction. The protein resides in the focal adhesion. Its function is as follows. Docking protein that plays a role in tyrosine kinase-based signaling related to cell adhesion and cell spreading. Regulates PTK2/FAK1 activity, focal adhesion integrity, and cell spreading. This chain is Cas scaffolding protein family member 4, found in Mus musculus (Mouse).